Here is a 335-residue protein sequence, read N- to C-terminus: Pyridoxal 5'-phosphate synthase subunit PdxS (335 aa).

Asp-59 contributes to the D-ribose 5-phosphate binding site. Lys-116 serves as the catalytic Schiff-base intermediate with D-ribose 5-phosphate. Residue Gly-188 coordinates D-ribose 5-phosphate. Lys-200 lines the D-glyceraldehyde 3-phosphate pocket. Residues Gly-253 and 274–275 (GS) contribute to the D-ribose 5-phosphate site.

Belongs to the PdxS/SNZ family. In the presence of PdxT, forms a dodecamer of heterodimers.

The enzyme catalyses aldehydo-D-ribose 5-phosphate + D-glyceraldehyde 3-phosphate + L-glutamine = pyridoxal 5'-phosphate + L-glutamate + phosphate + 3 H2O + H(+). It functions in the pathway cofactor biosynthesis; pyridoxal 5'-phosphate biosynthesis. In terms of biological role, catalyzes the formation of pyridoxal 5'-phosphate from ribose 5-phosphate (RBP), glyceraldehyde 3-phosphate (G3P) and ammonia. The ammonia is provided by the PdxT subunit. Can also use ribulose 5-phosphate and dihydroxyacetone phosphate as substrates, resulting from enzyme-catalyzed isomerization of RBP and G3P, respectively. In Hyperthermus butylicus (strain DSM 5456 / JCM 9403 / PLM1-5), this protein is Pyridoxal 5'-phosphate synthase subunit PdxS.